A 734-amino-acid chain; its full sequence is Photosystem I P700 chlorophyll a apoprotein A2 (734 aa).

Helical transmembrane passes span 46–69, 135–158, 175–199, 273–291, 330–353, 369–395, 417–439, and 517–535; these read IFASHFGQLAVIFLWTSGNLFHVA, LYTGALFLLAVSAVALVAGWLHLQ, LNHHLSGLFGVSSLAWTGHLVHVAI, IAHHHLAIAVLFIVAGHMY, LHFQLGLALASLGVITSLVAQHMY, AALYTHHQYIAGFIMTGAFAHGAIFFI, AIISHLSWASLFLGFHTLGLYVH, and FLVHHAIALGLHTTTLILV. 2 residues coordinate [4Fe-4S] cluster: cysteine 559 and cysteine 568. 2 helical membrane-spanning segments follow: residues 575–596 and 643–665; these read AFYLAVFWMLNTIGWVTFYWHW and LSVWAWMFLFGHLVWATGFMFLI. The chlorophyll a site is built by histidine 654, methionine 662, and tyrosine 670. Tryptophan 671 contributes to the phylloquinone binding site. Residues 707–727 traverse the membrane as a helical segment; the sequence is LVGLAHFSVGYIFTYAAFLIA.

Belongs to the PsaA/PsaB family. The PsaA/B heterodimer binds the P700 chlorophyll special pair and subsequent electron acceptors. PSI consists of a core antenna complex that captures photons, and an electron transfer chain that converts photonic excitation into a charge separation. The eukaryotic PSI reaction center is composed of at least 11 subunits. Requires P700 is a chlorophyll a/chlorophyll a' dimer, A0 is one or more chlorophyll a, A1 is one or both phylloquinones and FX is a shared 4Fe-4S iron-sulfur center. as cofactor.

The protein resides in the plastid. The protein localises to the chloroplast thylakoid membrane. It carries out the reaction reduced [plastocyanin] + hnu + oxidized [2Fe-2S]-[ferredoxin] = oxidized [plastocyanin] + reduced [2Fe-2S]-[ferredoxin]. In terms of biological role, psaA and PsaB bind P700, the primary electron donor of photosystem I (PSI), as well as the electron acceptors A0, A1 and FX. PSI is a plastocyanin-ferredoxin oxidoreductase, converting photonic excitation into a charge separation, which transfers an electron from the donor P700 chlorophyll pair to the spectroscopically characterized acceptors A0, A1, FX, FA and FB in turn. Oxidized P700 is reduced on the lumenal side of the thylakoid membrane by plastocyanin. The sequence is that of Photosystem I P700 chlorophyll a apoprotein A2 from Zygnema circumcarinatum (Green alga).